Reading from the N-terminus, the 278-residue chain is Keratin-associated protein 5-1 (278 aa).

8 tandem repeats follow at residues 42–45 (CCVP), 48–51 (CCKP), 130–133 (CCVP), 136–139 (CCKP), 142–145 (CCVP), 239–242 (CCKP), 258–261 (CCKP), and 268–271 (CCVP). The segment at 42-271 (CCVPVCCCKP…CCSQSSCCVP (230 aa)) is 8 X 4 AA repeats of C-C-X-P.

Belongs to the KRTAP type 5 family. Interacts with hair keratins. As to expression, expressed in hair root but not in skin. Expressed also in lung, pancreas, ovary, testis.

Functionally, in the hair cortex, hair keratin intermediate filaments are embedded in an interfilamentous matrix, consisting of hair keratin-associated protein (KRTAP), which are essential for the formation of a rigid and resistant hair shaft through their extensive disulfide bond cross-linking with abundant cysteine residues of hair keratins. The matrix proteins include the high-sulfur and high-glycine-tyrosine keratins. The polypeptide is Keratin-associated protein 5-1 (KRTAP5-1) (Homo sapiens (Human)).